The primary structure comprises 131 residues: Transcription antitermination protein NusB (131 aa).

The protein belongs to the NusB family.

Its function is as follows. Involved in transcription antitermination. Required for transcription of ribosomal RNA (rRNA) genes. Binds specifically to the boxA antiterminator sequence of the ribosomal RNA (rrn) operons. The protein is Transcription antitermination protein NusB of Campylobacter fetus subsp. fetus (strain 82-40).